A 638-amino-acid polypeptide reads, in one-letter code: Threonine--tRNA ligase (638 aa).

In terms of domain architecture, TGS spans 1–62 (MYQLTLPDKS…EKNSNIEVLT (62 aa)). The catalytic stretch occupies residues 246–537 (DHRKIGKEMD…LIEHYEGKFP (292 aa)). Zn(2+) contacts are provided by C337, H388, and H514.

This sequence belongs to the class-II aminoacyl-tRNA synthetase family. As to quaternary structure, homodimer. Requires Zn(2+) as cofactor.

The protein resides in the cytoplasm. The catalysed reaction is tRNA(Thr) + L-threonine + ATP = L-threonyl-tRNA(Thr) + AMP + diphosphate + H(+). Its function is as follows. Catalyzes the attachment of threonine to tRNA(Thr) in a two-step reaction: L-threonine is first activated by ATP to form Thr-AMP and then transferred to the acceptor end of tRNA(Thr). Also edits incorrectly charged L-seryl-tRNA(Thr). This is Threonine--tRNA ligase from Leptospira interrogans serogroup Icterohaemorrhagiae serovar copenhageni (strain Fiocruz L1-130).